The chain runs to 395 residues: Elongation factor Tu (395 aa).

The tr-type G domain occupies 10 to 205 (KPHVNVGTIG…VDNDIPIPPR (196 aa)). The tract at residues 19 to 26 (GHVDHGKT) is G1. GTP is bound at residue 19-26 (GHVDHGKT). Residue T26 coordinates Mg(2+). The segment at 60 to 64 (GITIN) is G2. Positions 81–84 (DCPG) are G3. GTP is bound by residues 81–85 (DCPGH) and 136–139 (NKVD). Residues 136-139 (NKVD) form a G4 region. The tract at residues 174–176 (SAL) is G5.

Belongs to the TRAFAC class translation factor GTPase superfamily. Classic translation factor GTPase family. EF-Tu/EF-1A subfamily. As to quaternary structure, monomer.

It is found in the cytoplasm. The enzyme catalyses GTP + H2O = GDP + phosphate + H(+). GTP hydrolase that promotes the GTP-dependent binding of aminoacyl-tRNA to the A-site of ribosomes during protein biosynthesis. The chain is Elongation factor Tu from Cytophaga hutchinsonii (strain ATCC 33406 / DSM 1761 / CIP 103989 / NBRC 15051 / NCIMB 9469 / D465).